Reading from the N-terminus, the 340-residue chain is UDP-N-acetylglucosamine--N-acetylmuramyl-(pentapeptide) pyrophosphoryl-undecaprenol N-acetylglucosamine transferase (340 aa).

UDP-N-acetyl-alpha-D-glucosamine is bound by residues 10 to 12 (TGG), Asn124, Ser179, and Gln277.

The protein belongs to the glycosyltransferase 28 family. MurG subfamily.

The protein resides in the cell inner membrane. The enzyme catalyses di-trans,octa-cis-undecaprenyl diphospho-N-acetyl-alpha-D-muramoyl-L-alanyl-D-glutamyl-meso-2,6-diaminopimeloyl-D-alanyl-D-alanine + UDP-N-acetyl-alpha-D-glucosamine = di-trans,octa-cis-undecaprenyl diphospho-[N-acetyl-alpha-D-glucosaminyl-(1-&gt;4)]-N-acetyl-alpha-D-muramoyl-L-alanyl-D-glutamyl-meso-2,6-diaminopimeloyl-D-alanyl-D-alanine + UDP + H(+). It participates in cell wall biogenesis; peptidoglycan biosynthesis. In terms of biological role, cell wall formation. Catalyzes the transfer of a GlcNAc subunit on undecaprenyl-pyrophosphoryl-MurNAc-pentapeptide (lipid intermediate I) to form undecaprenyl-pyrophosphoryl-MurNAc-(pentapeptide)GlcNAc (lipid intermediate II). This Sulfurimonas denitrificans (strain ATCC 33889 / DSM 1251) (Thiomicrospira denitrificans (strain ATCC 33889 / DSM 1251)) protein is UDP-N-acetylglucosamine--N-acetylmuramyl-(pentapeptide) pyrophosphoryl-undecaprenol N-acetylglucosamine transferase.